A 417-amino-acid polypeptide reads, in one-letter code: Serine hydroxymethyltransferase 4 (417 aa).

Residues Leu121 and 125 to 127 each bind (6S)-5,6,7,8-tetrahydrofolate; that span reads GHL. Residue Lys230 is modified to N6-(pyridoxal phosphate)lysine. 355–357 contacts (6S)-5,6,7,8-tetrahydrofolate; it reads SPF.

This sequence belongs to the SHMT family. As to quaternary structure, homodimer. The cofactor is pyridoxal 5'-phosphate.

The protein localises to the cytoplasm. The catalysed reaction is (6R)-5,10-methylene-5,6,7,8-tetrahydrofolate + glycine + H2O = (6S)-5,6,7,8-tetrahydrofolate + L-serine. Its pathway is one-carbon metabolism; tetrahydrofolate interconversion. It participates in amino-acid biosynthesis; glycine biosynthesis; glycine from L-serine: step 1/1. Its function is as follows. Catalyzes the reversible interconversion of serine and glycine with tetrahydrofolate (THF) serving as the one-carbon carrier. This reaction serves as the major source of one-carbon groups required for the biosynthesis of purines, thymidylate, methionine, and other important biomolecules. Also exhibits THF-independent aldolase activity toward beta-hydroxyamino acids, producing glycine and aldehydes, via a retro-aldol mechanism. This chain is Serine hydroxymethyltransferase 4, found in Colwellia psychrerythraea (strain 34H / ATCC BAA-681) (Vibrio psychroerythus).